Consider the following 249-residue polypeptide: 3-deoxy-manno-octulosonate cytidylyltransferase (249 aa).

Belongs to the KdsB family.

It localises to the cytoplasm. The catalysed reaction is 3-deoxy-alpha-D-manno-oct-2-ulosonate + CTP = CMP-3-deoxy-beta-D-manno-octulosonate + diphosphate. It functions in the pathway nucleotide-sugar biosynthesis; CMP-3-deoxy-D-manno-octulosonate biosynthesis; CMP-3-deoxy-D-manno-octulosonate from 3-deoxy-D-manno-octulosonate and CTP: step 1/1. Its pathway is bacterial outer membrane biogenesis; lipopolysaccharide biosynthesis. Activates KDO (a required 8-carbon sugar) for incorporation into bacterial lipopolysaccharide in Gram-negative bacteria. The chain is 3-deoxy-manno-octulosonate cytidylyltransferase from Coxiella burnetii (strain CbuG_Q212) (Coxiella burnetii (strain Q212)).